The chain runs to 484 residues: MNEDMMTEAERASIAADGTDSLLGERGKGVFHIHTLGCQMNVHDSERIAGVLEANGYVPATEDQINDNDLDLLVLNTCAVRENAAERMYGTIGRFNRVKLVRPNLQIAVGGCMAQLDRKKIADTAPWVSAVFGTKNIEDLPKLLDQNRATGKAQVQVTEQLRQFPSQLPAARASRISSWVAISVGCNNTCTFCIVPTTRGKEKDRRPGDILDEIRQCVAGGAKEVTLLGQNVNSFGYGIGDRYAFSKLLRACGTIDGLERVRFTSPHPAAFTDDVIAAMAETPNIMHQLHFPLQSGSDRILRAMRRSYRSAKFLDILGRIREAMPDAQISTDIIVGFPGETEEDFQQTMDVVRQARFSSAFTFIYSPRPGTPAAAMEQIPRDVVQDRFDRLVALQEQITEENLATFEGRDVEVMITGKLGKKDTDTHRVTGREKTGVLVHIGVPEGEPVPEIGDFVTVTVTHAGRHNLLADPDVAAGQTYSVRH.

In terms of domain architecture, MTTase N-terminal spans 29 to 149; that stretch reads GVFHIHTLGC…LPKLLDQNRA (121 aa). [4Fe-4S] cluster is bound by residues Cys38, Cys78, Cys112, Cys186, Cys190, and Cys193. The 230-residue stretch at 172 to 401 folds into the Radical SAM core domain; it reads RASRISSWVA…VALQEQITEE (230 aa). The region spanning 404–474 is the TRAM domain; sequence ATFEGRDVEV…RHNLLADPDV (71 aa).

Belongs to the methylthiotransferase family. MiaB subfamily. In terms of assembly, monomer. The cofactor is [4Fe-4S] cluster.

It localises to the cytoplasm. The catalysed reaction is N(6)-dimethylallyladenosine(37) in tRNA + (sulfur carrier)-SH + AH2 + 2 S-adenosyl-L-methionine = 2-methylsulfanyl-N(6)-dimethylallyladenosine(37) in tRNA + (sulfur carrier)-H + 5'-deoxyadenosine + L-methionine + A + S-adenosyl-L-homocysteine + 2 H(+). Catalyzes the methylthiolation of N6-(dimethylallyl)adenosine (i(6)A), leading to the formation of 2-methylthio-N6-(dimethylallyl)adenosine (ms(2)i(6)A) at position 37 in tRNAs that read codons beginning with uridine. This Bifidobacterium longum subsp. infantis (strain ATCC 15697 / DSM 20088 / JCM 1222 / NCTC 11817 / S12) protein is tRNA-2-methylthio-N(6)-dimethylallyladenosine synthase.